Consider the following 624-residue polypeptide: APC membrane recruitment protein 2 (624 aa).

Disordered regions lie at residues 77 to 111 (EEPC…SVAK), 126 to 177 (ENVK…GLIL), 195 to 230 (PLCE…PLNG), 342 to 369 (ADQD…SKKN), and 397 to 588 (FSMI…ELPR). The span at 102-111 (DVSSDSSVAK) shows a compositional bias: low complexity. 2 stretches are compositionally biased toward basic and acidic residues: residues 155–168 (SKKD…KEGA) and 195–204 (PLCEKEKSEE). Positions 352–363 (KGSKVVPGNGKK) are enriched in low complexity. Basic and acidic residues-rich tracts occupy residues 422–435 (REVK…DRNT) and 450–469 (ERGD…RNSD).

The protein belongs to the Amer family.

The protein localises to the cell membrane. Its function is as follows. Negative regulator of the canonical Wnt signaling pathway involved in neuroectodermal patterning. Acts by specifically binding phosphatidylinositol 4,5-bisphosphate (PtdIns(4,5)P2), translocating to the cell membrane and interacting with key regulators of the canonical Wnt signaling pathway, such as components of the beta-catenin destruction complex. In Xenopus laevis (African clawed frog), this protein is APC membrane recruitment protein 2 (amer2).